The chain runs to 243 residues: Carboxy-S-adenosyl-L-methionine synthase (243 aa).

Residues Y40, 65 to 67 (GCS), 90 to 91 (DN), 118 to 119 (DI), N133, and R200 each bind S-adenosyl-L-methionine.

The protein belongs to the class I-like SAM-binding methyltransferase superfamily. Cx-SAM synthase family. As to quaternary structure, homodimer.

It catalyses the reaction prephenate + S-adenosyl-L-methionine = carboxy-S-adenosyl-L-methionine + 3-phenylpyruvate + H2O. Functionally, catalyzes the conversion of S-adenosyl-L-methionine (SAM) to carboxy-S-adenosyl-L-methionine (Cx-SAM). This chain is Carboxy-S-adenosyl-L-methionine synthase, found in Shewanella woodyi (strain ATCC 51908 / MS32).